The following is a 90-amino-acid chain: Small cysteine-rich outer membrane protein OmcA (90 aa).

An N-terminal signal peptide occupies residues 1–19 (MKKAVLIAAMFCGVVSLSS). The N-palmitoyl cysteine moiety is linked to residue C20. Residue C20 is the site of S-diacylglycerol cysteine attachment. A disordered region spans residues 69-90 (TECNSQSPQVKGCTSPDGRCKQ).

As to quaternary structure, part of a disulfide cross-linked outer membrane complex (COMC) composed of the major outer membrane porin (MOMP), the small cysteine-rich protein (OmcA) and the large cysteine-rich periplasmic protein (OmcB).

It localises to the cell outer membrane. In elementary bodies (EBs, the infectious stage, which is able to survive outside the host cell) provides the structural integrity of the outer envelope through disulfide cross-links with the large cysteine-rich periplasmic protein and the major outer membrane porin. It has been described in publications as the Sarkosyl-insoluble COMC (Chlamydia outer membrane complex), and serves as the functional equivalent of peptidoglycan. The polypeptide is Small cysteine-rich outer membrane protein OmcA (omcA) (Chlamydia pneumoniae (Chlamydophila pneumoniae)).